The sequence spans 227 residues: Cytidylate kinase (227 aa).

12–20 (GPSGAGKGT) serves as a coordination point for ATP.

This sequence belongs to the cytidylate kinase family. Type 1 subfamily.

The protein resides in the cytoplasm. The catalysed reaction is CMP + ATP = CDP + ADP. It catalyses the reaction dCMP + ATP = dCDP + ADP. The polypeptide is Cytidylate kinase (Salmonella choleraesuis (strain SC-B67)).